The sequence spans 167 residues: MAHIEKQAGELQEKLIAVNRVSKTVKGGRIFSFTALTVVGDGNGRVGFGYGKAREVPAAIQKAMEKARRNMINVALNNGTLQHPVKGAHTGSRVFMQPASEGTGIIAGGAMRAVLEVAGVHNVLAKAYGSTNPINVVRATIDGLENMNSPEMVAAKRGKSVEEILGK.

The region spanning 11-74 (LQEKLIAVNR…EKARRNMINV (64 aa)) is the S5 DRBM domain.

The protein belongs to the universal ribosomal protein uS5 family. In terms of assembly, part of the 30S ribosomal subunit. Contacts proteins S4 and S8.

In terms of biological role, with S4 and S12 plays an important role in translational accuracy. Functionally, located at the back of the 30S subunit body where it stabilizes the conformation of the head with respect to the body. The protein is Small ribosomal subunit protein uS5 of Shigella dysenteriae serotype 1 (strain Sd197).